The primary structure comprises 239 residues: RNA chaperone ProQ (239 aa).

The segment at 107–177 (KARVQAQRAE…RKPVAKPVQA (71 aa)) is disordered. A compositionally biased stretch (basic and acidic residues) spans 115–137 (AEQRAKKREAENVAAGEKNERPT).

This sequence belongs to the ProQ family.

The protein localises to the cytoplasm. RNA chaperone with significant RNA binding, RNA strand exchange and RNA duplexing activities. May regulate ProP activity through an RNA-based, post-transcriptional mechanism. This Photorhabdus laumondii subsp. laumondii (strain DSM 15139 / CIP 105565 / TT01) (Photorhabdus luminescens subsp. laumondii) protein is RNA chaperone ProQ.